The following is an 84-amino-acid chain: Large ribosomal subunit protein bL31B (84 aa).

This sequence belongs to the bacterial ribosomal protein bL31 family. Type B subfamily. As to quaternary structure, part of the 50S ribosomal subunit.

This chain is Large ribosomal subunit protein bL31B, found in Alkalilimnicola ehrlichii (strain ATCC BAA-1101 / DSM 17681 / MLHE-1).